Reading from the N-terminus, the 306-residue chain is Pantothenate kinase (306 aa).

Residue glycine 91–serine 98 participates in ATP binding.

It belongs to the prokaryotic pantothenate kinase family.

It is found in the cytoplasm. It catalyses the reaction (R)-pantothenate + ATP = (R)-4'-phosphopantothenate + ADP + H(+). The protein operates within cofactor biosynthesis; coenzyme A biosynthesis; CoA from (R)-pantothenate: step 1/5. The protein is Pantothenate kinase of Streptococcus pneumoniae serotype 2 (strain D39 / NCTC 7466).